The primary structure comprises 671 residues: MEPIEQQLTELRTTLRHHEYLYHVMDAPEIPDAEYDRLMRELRELEAQRPDLITPDSPTQRVGAAPLTAFNQIRHEVPMLSLDNVFDEESFLAFNKRVQDRLKSTENVIWCCELKLDGLAVSILYENGVLVSAATRGDGTTGEDITSNVRTIRAIPLKLHGDNIPARLEVRGEVFLPQAGFEKINEDARRTGGKVFANPRNAAAGSLRQLDPRITAKRPLTFFCYGVGILEGGELPDTHLGRLLQFKAWGLPVSDRVTLCDSPQAVLDFYRNVEKDRPTLGFDIDGVVIKVNSLALQEQLGFVARAPRWAVAFKFPAQEQMTFVRDVEFQVGRTGAITPVARLEPVQVAGVLVSNATLHNADEIERLGLRIGDKVVIRRAGDVIPQVVNVVLSERPEETRPIVFPTHCPVCGSDVERVEGEAVTRCTGGLICGAQRKESLKHFVSRRAMDVDGMGDKIIDQLVEREYVHTPADLFRLTAGKLTGLDRMGPKSAQNVVNALEKAKATTFARFLYALGIREVGEATAAGLAAYFGTLEALQAATIDELQKVPDVGIVVATHVFNFFAEESNRDVIVQLLAEGVHWPAPVVINVQEIDSPFAGKTVVLTGSLSQMSRDDAKARLVALGAKVAGSVSKKTDLVIAGEAAGSKLAKAQELGITVIDEAEMIRLLGA.

NAD(+)-binding positions include 32–36, 81–82, and Glu-113; these read DAEYD and SL. Catalysis depends on Lys-115, which acts as the N6-AMP-lysine intermediate. Positions 136, 173, 290, and 314 each coordinate NAD(+). Residues Cys-408, Cys-411, Cys-426, and Cys-432 each contribute to the Zn(2+) site. In terms of domain architecture, BRCT spans 593 to 671; that stretch reads EIDSPFAGKT…EAEMIRLLGA (79 aa).

Belongs to the NAD-dependent DNA ligase family. LigA subfamily. The cofactor is Mg(2+). It depends on Mn(2+) as a cofactor.

It carries out the reaction NAD(+) + (deoxyribonucleotide)n-3'-hydroxyl + 5'-phospho-(deoxyribonucleotide)m = (deoxyribonucleotide)n+m + AMP + beta-nicotinamide D-nucleotide.. Its function is as follows. DNA ligase that catalyzes the formation of phosphodiester linkages between 5'-phosphoryl and 3'-hydroxyl groups in double-stranded DNA using NAD as a coenzyme and as the energy source for the reaction. It is essential for DNA replication and repair of damaged DNA. This chain is DNA ligase, found in Salmonella paratyphi C (strain RKS4594).